The sequence spans 198 residues: Probable minor pilin MMP0709 (198 aa).

Positions M1–G5 are excised as a propeptide. A QXSXEXXXL motif is present at residues Q6–L14.

The N-terminus is probably cleaved by the prepilin peptidase EppA, which recognizes the class III signal sequence.

It localises to the secreted. The protein localises to the cell surface. The protein resides in the fimbrium. This Methanococcus maripaludis (strain DSM 14266 / JCM 13030 / NBRC 101832 / S2 / LL) protein is Probable minor pilin MMP0709.